A 308-amino-acid polypeptide reads, in one-letter code: KH domain-containing protein At4g26480 (308 aa).

The interval 1–26 is disordered; that stretch reads MMMMTSLGGGAGGGGGGGGSGGGRFV. Positions 7–24 are enriched in gly residues; that stretch reads LGGGAGGGGGGGGSGGGR. The KH domain maps to 165-232; that stretch reads DIPVDKYPNY…EHLNEPLHIL (68 aa). The disordered stretch occupies residues 284-308; the sequence is EEGSPMSGSISPYNSLGMKRAKTRG. The residue at position 294 (serine 294) is a Phosphoserine.

The protein resides in the nucleus. This chain is KH domain-containing protein At4g26480, found in Arabidopsis thaliana (Mouse-ear cress).